The following is a 188-amino-acid chain: ATP synthase subunit delta (188 aa).

This sequence belongs to the ATPase delta chain family. As to quaternary structure, F-type ATPases have 2 components, F(1) - the catalytic core - and F(0) - the membrane proton channel. F(1) has five subunits: alpha(3), beta(3), gamma(1), delta(1), epsilon(1). F(0) has three main subunits: a(1), b(2) and c(10-14). The alpha and beta chains form an alternating ring which encloses part of the gamma chain. F(1) is attached to F(0) by a central stalk formed by the gamma and epsilon chains, while a peripheral stalk is formed by the delta and b chains.

The protein resides in the cell inner membrane. In terms of biological role, f(1)F(0) ATP synthase produces ATP from ADP in the presence of a proton or sodium gradient. F-type ATPases consist of two structural domains, F(1) containing the extramembraneous catalytic core and F(0) containing the membrane proton channel, linked together by a central stalk and a peripheral stalk. During catalysis, ATP synthesis in the catalytic domain of F(1) is coupled via a rotary mechanism of the central stalk subunits to proton translocation. Its function is as follows. This protein is part of the stalk that links CF(0) to CF(1). It either transmits conformational changes from CF(0) to CF(1) or is implicated in proton conduction. In Rhizobium etli (strain ATCC 51251 / DSM 11541 / JCM 21823 / NBRC 15573 / CFN 42), this protein is ATP synthase subunit delta.